The chain runs to 71 residues: Defensin 1 (71 aa).

The N-terminal stretch at 1–25 (KTVAGFCIFFLVLFLAQEGVVKTEA) is a signal peptide. Disulfide bonds link cysteine 28/cysteine 71, cysteine 39/cysteine 60, and cysteine 45/cysteine 65.

This sequence belongs to the DEFL family. As to quaternary structure, may form dimers. Not glycosylated. Post-translationally, contains 4 disulfide bonds. In terms of processing, met-61 and Met-63 might be oxidized in some molecules.

Its function is as follows. Probably has antifungal activity. The protein is Defensin 1 of Arachis hypogaea (Peanut).